We begin with the raw amino-acid sequence, 429 residues long: Enolase (429 aa).

Glutamine 163 provides a ligand contact to (2R)-2-phosphoglycerate. Glutamate 205 serves as the catalytic Proton donor. Residues aspartate 242, glutamate 286, and aspartate 313 each coordinate Mg(2+). (2R)-2-phosphoglycerate contacts are provided by lysine 338, arginine 367, serine 368, and lysine 389. The Proton acceptor role is filled by lysine 338.

It belongs to the enolase family. Mg(2+) serves as cofactor.

Its subcellular location is the cytoplasm. The protein localises to the secreted. It localises to the cell surface. The enzyme catalyses (2R)-2-phosphoglycerate = phosphoenolpyruvate + H2O. The protein operates within carbohydrate degradation; glycolysis; pyruvate from D-glyceraldehyde 3-phosphate: step 4/5. In terms of biological role, catalyzes the reversible conversion of 2-phosphoglycerate (2-PG) into phosphoenolpyruvate (PEP). It is essential for the degradation of carbohydrates via glycolysis. In Pelobacter propionicus (strain DSM 2379 / NBRC 103807 / OttBd1), this protein is Enolase.